Consider the following 364-residue polypeptide: D-alanine--D-alanine ligase A (364 aa).

Positions 145–348 constitute an ATP-grasp domain; sequence KRLLRDAGLN…YTDLITRLIE (204 aa). 175 to 230 lines the ATP pocket; it reads ESKLGLPLFVKPANQGSSVGVSKVTSEEQYAIAVDLAFEFDHKVIVEQGIKGREIE. Residues Asp302, Glu315, and Asn317 each contribute to the Mg(2+) site.

It belongs to the D-alanine--D-alanine ligase family. Mg(2+) serves as cofactor. Mn(2+) is required as a cofactor.

The protein localises to the cytoplasm. It catalyses the reaction 2 D-alanine + ATP = D-alanyl-D-alanine + ADP + phosphate + H(+). The protein operates within cell wall biogenesis; peptidoglycan biosynthesis. Functionally, cell wall formation. This chain is D-alanine--D-alanine ligase A (ddlA), found in Escherichia coli O157:H7.